The sequence spans 290 residues: 7-methylguanosine phosphate-specific 5'-nucleotidase A (290 aa).

The active-site Nucleophile is the aspartate 39. Mg(2+) contacts are provided by aspartate 39 and aspartate 41. The Proton donor role is filled by aspartate 41. A CMP-binding site is contributed by glutamate 86. Glutamate 86 lines the N(7)-methyl-GMP pocket. Residues 154–155 (SA) and lysine 203 contribute to the substrate site. Mg(2+) is bound at residue aspartate 228.

Belongs to the pyrimidine 5'-nucleotidase family. In terms of assembly, monomer.

Its subcellular location is the cytoplasm. The catalysed reaction is N(7)-methyl-GMP + H2O = N(7)-methylguanosine + phosphate. The enzyme catalyses CMP + H2O = cytidine + phosphate. It catalyses the reaction a ribonucleoside 5'-phosphate + H2O = a ribonucleoside + phosphate. Its function is as follows. Specifically hydrolyzes 7-methylguanosine monophosphate (m(7)GMP) to 7-methylguanosine and inorganic phosphate. The specific activity for m(7)GMP may protect cells against undesired salvage of m(7)GMP and its incorporation into nucleic acids. Also has weak activity for CMP. UMP and purine nucleotides are poor substrates. This chain is 7-methylguanosine phosphate-specific 5'-nucleotidase A (Nt5c3b-a), found in Xenopus laevis (African clawed frog).